A 58-amino-acid chain; its full sequence is Ribulose bisphosphate carboxylase large chain (58 aa).

A propeptide spanning residues 1–2 is cleaved from the precursor; it reads MS. The residue at position 3 (proline 3) is an N-acetylproline. Lysine 14 carries the post-translational modification N6,N6,N6-trimethyllysine.

This sequence belongs to the RuBisCO large chain family. Type I subfamily. As to quaternary structure, heterohexadecamer of 8 large chains and 8 small chains.

Its subcellular location is the plastid. It is found in the chloroplast. The catalysed reaction is 2 (2R)-3-phosphoglycerate + 2 H(+) = D-ribulose 1,5-bisphosphate + CO2 + H2O. The enzyme catalyses D-ribulose 1,5-bisphosphate + O2 = 2-phosphoglycolate + (2R)-3-phosphoglycerate + 2 H(+). Its function is as follows. RuBisCO catalyzes two reactions: the carboxylation of D-ribulose 1,5-bisphosphate, the primary event in carbon dioxide fixation, as well as the oxidative fragmentation of the pentose substrate in the photorespiration process. Both reactions occur simultaneously and in competition at the same active site. In Euonymus maackii (Maack's spindle tree), this protein is Ribulose bisphosphate carboxylase large chain (rbcL).